We begin with the raw amino-acid sequence, 291 residues long: uncharacterized protein (291 aa).

Disordered regions lie at residues 29–50 (SEKP…LRDS) and 168–291 (RKVK…AELK). Residue serine 50 is modified to Phosphoserine. Composition is skewed to polar residues over residues 176 to 186 (NSKNPSKTGTP) and 205 to 217 (QKNS…SKLI). Basic and acidic residues predominate over residues 221–237 (YKDEWLQQQKAEADRRT). The segment covering 280 to 291 (SSPSESTPAELK) has biased composition (polar residues).

This is an uncharacterized protein from Mus musculus (Mouse).